Here is a 120-residue protein sequence, read N- to C-terminus: Ribonuclease P protein component (120 aa).

It belongs to the RnpA family. Consists of a catalytic RNA component (M1 or rnpB) and a protein subunit.

It carries out the reaction Endonucleolytic cleavage of RNA, removing 5'-extranucleotides from tRNA precursor.. Its function is as follows. RNaseP catalyzes the removal of the 5'-leader sequence from pre-tRNA to produce the mature 5'-terminus. It can also cleave other RNA substrates such as 4.5S RNA. The protein component plays an auxiliary but essential role in vivo by binding to the 5'-leader sequence and broadening the substrate specificity of the ribozyme. In Bordetella avium (strain 197N), this protein is Ribonuclease P protein component.